Reading from the N-terminus, the 284-residue chain is MSKFEAFLRPTQTYHSRTYDRISKHHNFNGTGKTILVTGGSSGVGYSICQAFAEADVARIAIVSRSPGPQAAAKAALEAAHPAVQIVTYAASITDHARMAAILAELGPVDVLVLCAAVVHRQVPATAITAAEMQAAFDVNVLAPFHLVQAYLATTTAGTKTVIHVSSAAAQSRSPFRAGYGPSKAAATQVMQHFAAERASPALRVFSFHPGAFYTPSVAEHYAPDSTGWEDINLPAHFARWLAGPESGFLNGRYLWAHWDVDELIALRDRVERDSSFLTIGLVV.

Val-37 lines the NADP(+) pocket. Active-site proton donor residues include Ser-166 and Tyr-180. NADP(+) contacts are provided by Tyr-180, Lys-184, and Thr-215. The Lowers pKa of active site Tyr role is filled by Lys-184.

It belongs to the short-chain dehydrogenases/reductases (SDR) family.

The protein operates within secondary metabolite biosynthesis. Its function is as follows. Short chain dehydrogenase/reductase; part of the gene cluster that mediates the biosynthesis of the tetrahydroxanthone dimer secalonic acid D. The pathway begins with the synthesis of atrochrysone thioester by the polyketide synthase AacuL. The atrochrysone carboxyl ACP thioesterase AacuM then breaks the thioester bond and releases the atrochrysone carboxylic acid from AacuL. Atrochrysone carboxylic acid is decarboxylated by the decarboxylase AacuI, and oxidized by the anthrone oxygenase AacuG to yield emodin. Emodin is then reduced to emodin hydroquinone by a yet unidentified oxidoreductase. A-ring reduction by the short chain dehydrogenase AacuN, dehydration by the scytalone dehydratase-like protein AacuK and probable spontaneous re-oxidation, results in overall deoxygenation to chrysophanol. Baeyer-Villiger oxidation by the Baeyer-Villiger monooxygenase (BVMO) AacuH then yields monodictyphenone. Monodictyphenone is transformed into compounds with the tetrahydroxanthone skeleton via methylesterification by the methyltransferase AacuQ, followed by the action of the flavin-dependent monooxygenase AacuC, the isomerase AacuP, and the short chain dehydrogenase/reductase AacuF or AacuD. AacuF and AacuD should accept the same compound as a substrate but perform the ketoreduction with a different stereoselectivity, thus yielding blennolides B and A, respectively. In the final step of the biosynthesis, the cytochrome P450 monooxygenase AacuE accepts blennolide B and/or blennolide A to conduct the dimerization reaction to furnish the tetrahydroxanthone dimers, secalonic acids D, B, and F. This Aspergillus aculeatus (strain ATCC 16872 / CBS 172.66 / WB 5094) protein is Short chain dehydrogenase/reductase AacuD.